The sequence spans 563 residues: MAPTAAVAGGGVEAEALLGLLQRVQSEALRAFGPNDFDPKLYVDLPLAADASAAAALASLPRAAPSRGEMEAYISRYFALAGSDLVAAADPPDFERDPPGFLPRVERAEARAWALEVHALWKDLTRRVAPAVAARPDRHTLLPLPGRVVVPGSRFREVYYWDSYWVVRGLLVSKMYETAKDIVLNLVYLVEKYGFVLNGARSYYTNRSQPPLLSSMVLDIYMATGDMAFVRRVFPSLLKEHSFWMSEVHNVAVMDNHGRVHNLSRYQAMWNKPRPESATIDEEFASKLSTAAKEKFYHQVASTAETGWDFSSRWMRDSTDMTTLTTSCIIPVDLNTFILKMEQDIAFFAKLIGESTTSEIFSEASKARHNAIDSVLWNADMEQWLDYWLPTDGNCQGVYQWKSISQNRAIFASNFVPLWLNAQHSGLEQFVDEAKSVRVMRSLQKSGLLQPAGIATSLSNTGQQWDFPNGWAPLQHLIVEGLLRSGSGEARELAEDIATRWVRTNYDAYKATGAMHEKYDVVTCGKSGGGGEYKPQTGFGWSNGVILSFLDEFGWPQDKKIDC.

Residues Arg-154, 161–162 (WD), Asn-198, 207–209 (RSQ), 274–276 (RPE), and Gly-307 contribute to the substrate site. Active-site proton donor/acceptor residues include Asp-309 and Glu-517. A substrate-binding site is contributed by Glu-532.

The protein belongs to the glycosyl hydrolase 37 family.

The catalysed reaction is alpha,alpha-trehalose + H2O = alpha-D-glucose + beta-D-glucose. Involved in the regulation of trehalose content by hydrolyzing trehalose to glucose. This chain is Probable trehalase, found in Oryza sativa subsp. japonica (Rice).